The primary structure comprises 424 residues: Kynureninase (424 aa).

Pyridoxal 5'-phosphate-binding positions include L106, T107, 134–137, D219, H222, and Y244; that span reads FPSD. K245 is subject to N6-(pyridoxal phosphate)lysine. Residues W274 and N302 each contribute to the pyridoxal 5'-phosphate site.

This sequence belongs to the kynureninase family. Homodimer. Pyridoxal 5'-phosphate is required as a cofactor.

The catalysed reaction is L-kynurenine + H2O = anthranilate + L-alanine + H(+). It carries out the reaction 3-hydroxy-L-kynurenine + H2O = 3-hydroxyanthranilate + L-alanine + H(+). Its pathway is amino-acid degradation; L-kynurenine degradation; L-alanine and anthranilate from L-kynurenine: step 1/1. It participates in cofactor biosynthesis; NAD(+) biosynthesis; quinolinate from L-kynurenine: step 2/3. In terms of biological role, catalyzes the cleavage of L-kynurenine (L-Kyn) and L-3-hydroxykynurenine (L-3OHKyn) into anthranilic acid (AA) and 3-hydroxyanthranilic acid (3-OHAA), respectively. The polypeptide is Kynureninase (Xanthomonas campestris pv. campestris (strain 8004)).